A 348-amino-acid polypeptide reads, in one-letter code: Protein pelota homolog (348 aa).

Belongs to the eukaryotic release factor 1 family. Pelota subfamily. As to quaternary structure, monomer. A divalent metal cation serves as cofactor.

It localises to the cytoplasm. Functionally, may function in recognizing stalled ribosomes, interact with stem-loop structures in stalled mRNA molecules, and effect endonucleolytic cleavage of the mRNA. May play a role in the release non-functional ribosomes and degradation of damaged mRNAs. Has endoribonuclease activity. This Methanococcus vannielii (strain ATCC 35089 / DSM 1224 / JCM 13029 / OCM 148 / SB) protein is Protein pelota homolog.